The primary structure comprises 141 residues: Large ribosomal subunit protein uL11 (141 aa).

This sequence belongs to the universal ribosomal protein uL11 family. As to quaternary structure, part of the ribosomal stalk of the 50S ribosomal subunit. Interacts with L10 and the large rRNA to form the base of the stalk. L10 forms an elongated spine to which L12 dimers bind in a sequential fashion forming a multimeric L10(L12)X complex. In terms of processing, one or more lysine residues are methylated.

In terms of biological role, forms part of the ribosomal stalk which helps the ribosome interact with GTP-bound translation factors. This Trichodesmium erythraeum (strain IMS101) protein is Large ribosomal subunit protein uL11.